A 286-amino-acid polypeptide reads, in one-letter code: tRNA (guanine-N(7)-)-methyltransferase (286 aa).

Phosphoserine occurs at positions 7 and 59. S-adenosyl-L-methionine contacts are provided by residues Gly-103, 126–127 (EI), 161–162 (NA), and Cys-181. Asp-184 is an active-site residue. An S-adenosyl-L-methionine-binding site is contributed by 259-261 (TEE).

It belongs to the class I-like SAM-binding methyltransferase superfamily. TrmB family. In terms of assembly, forms a complex with TRM82.

It localises to the nucleus. The enzyme catalyses guanosine(46) in tRNA + S-adenosyl-L-methionine = N(7)-methylguanosine(46) in tRNA + S-adenosyl-L-homocysteine. Its pathway is tRNA modification; N(7)-methylguanine-tRNA biosynthesis. In terms of biological role, methyltransferase that catalyzes the formation of N(7)-methylguanine at position 46 (m7G46) in tRNA, a modification required to maintain stability of tRNAs; its absence resulting in tRNA decay. Both the D-stem and T-stem structures of tRNAs are required for efficient methyltransferase activity. This is tRNA (guanine-N(7)-)-methyltransferase from Saccharomyces cerevisiae (strain YJM789) (Baker's yeast).